Reading from the N-terminus, the 186-residue chain is Alkyl hydroperoxide reductase AhpD (186 aa).

The Proton donor role is filled by Cys132. The cysteines at positions 132 and 135 are disulfide-linked. Residue Cys135 is the Cysteine sulfenic acid (-SOH) intermediate of the active site.

This sequence belongs to the AhpD family.

It carries out the reaction N(6)-[(R)-dihydrolipoyl]-L-lysyl-[lipoyl-carrier protein] + a hydroperoxide = N(6)-[(R)-lipoyl]-L-lysyl-[lipoyl-carrier protein] + an alcohol + H2O. Antioxidant protein with alkyl hydroperoxidase activity. Required for the reduction of the AhpC active site cysteine residues and for the regeneration of the AhpC enzyme activity. This Anaeromyxobacter dehalogenans (strain 2CP-1 / ATCC BAA-258) protein is Alkyl hydroperoxide reductase AhpD.